A 281-amino-acid chain; its full sequence is MVYIHFPNNLTEEEHMLQAKYQKLKKKKKALQAHKAPKQEPESALTLKRPTDARDAREVARKLIKSGAIPAIQKQQTKQDQTSFKRPKGQERAKRSTSETTVAAYQPFSSTQNDVAQETIISEIIKEEPRRQNLYQHFATERVREERGLTEKVTLDTTQPEKPRAGNTIFVSGNKVTEEFLKKTFNDYGTIVNVSMEIEKSRGFVSFAKPESADRAIAEMHGKSVTGIVLQVQLARRQPQIVPINDASSSAVWSSIAASKSQKGSHKDLRQMVQYNDDFLM.

The segment covering 25–36 (KKKKKALQAHKA) has biased composition (basic residues). Positions 25-109 (KKKKKALQAH…TTVAAYQPFS (85 aa)) are disordered. The segment covering 49–61 (RPTDARDAREVAR) has biased composition (basic and acidic residues). Residues 73 to 84 (QKQQTKQDQTSF) are compositionally biased toward polar residues. Basic and acidic residues predominate over residues 88–97 (KGQERAKRST). The span at 98 to 109 (SETTVAAYQPFS) shows a compositional bias: polar residues. Residues 167-237 (NTIFVSGNKV…IVLQVQLARR (71 aa)) form the RRM domain.

The protein belongs to the RRM NELF-E family. In terms of assembly, component of the NELF complex, which is at least composed of TH1/NELF-D and NELF-E.

It is found in the nucleus. It localises to the chromosome. In terms of biological role, essential component of the NELF complex, a complex that negatively regulates the elongation of transcription by RNA polymerase II by RNA polymerase II. The NELF complex, which acts via an association with the DSIF complex, causes transcriptional pausing. This is Negative elongation factor E (Nelf-E) from Drosophila virilis (Fruit fly).